The following is a 316-amino-acid chain: 4-hydroxyphenylacetate decarboxylase activating enzyme (316 aa).

In terms of domain architecture, Radical SAM core spans 20–307 (HDGPGCRTTV…QDIFLDNGIA (288 aa)). 7 residues coordinate [4Fe-4S] cluster: Cys-34, Cys-38, Cys-41, Cys-60, Cys-66, Cys-69, and Cys-105. Residue 40 to 42 (WCA) coordinates S-adenosyl-L-methionine. The 32-residue stretch at 84–115 (NKPVIDWNICKDCESFECVNSCYYNAFKLCAK) folds into the 4Fe-4S ferredoxin-type domain. Residues Gly-144, 193-195 (DIK), and His-267 each bind S-adenosyl-L-methionine.

This sequence belongs to the organic radical-activating enzymes family. In terms of assembly, monomer. [4Fe-4S] cluster serves as cofactor.

The catalysed reaction is glycyl-[protein] + reduced [flavodoxin] + S-adenosyl-L-methionine = glycin-2-yl radical-[protein] + semiquinone [flavodoxin] + 5'-deoxyadenosine + L-methionine + H(+). Catalyzes activation of 4-hydroxyphenylacetate decarboxylase under anaerobic conditions by generation of an organic free radical on a glycine residue, via a homolytic cleavage of S-adenosyl-L-methionine (SAM). The polypeptide is 4-hydroxyphenylacetate decarboxylase activating enzyme (Clostridioides difficile (strain 630) (Peptoclostridium difficile)).